Here is a 130-residue protein sequence, read N- to C-terminus: Small ribosomal subunit protein uS8 (130 aa).

This sequence belongs to the universal ribosomal protein uS8 family. Part of the 30S ribosomal subunit. Contacts proteins S5 and S12.

One of the primary rRNA binding proteins, it binds directly to 16S rRNA central domain where it helps coordinate assembly of the platform of the 30S subunit. The protein is Small ribosomal subunit protein uS8 of Pseudomonas fluorescens (strain SBW25).